A 144-amino-acid chain; its full sequence is Interleukin-3 (144 aa).

The first 17 residues, 1-17, serve as a signal peptide directing secretion; the sequence is MSSLSILHLLLLLLALH.

This sequence belongs to the IL-3 family. As to quaternary structure, monomer.

It localises to the secreted. In terms of biological role, granulocyte/macrophage colony-stimulating factors are cytokines that act in hematopoiesis by controlling the production, differentiation, and function of 2 related white cell populations of the blood, the granulocytes and the monocytes-macrophages. Its function is as follows. This CSF induces granulocytes, macrophages, mast cells, stem cells, erythroid cells, eosinophils and megakaryocytes. The polypeptide is Interleukin-3 (IL3) (Bos taurus (Bovine)).